Reading from the N-terminus, the 823-residue chain is Semaphorin-4B (823 aa).

A signal peptide spans 1-30; sequence MGRASRSAVLRRALLLLLLLLLLRTTTTRA. The Extracellular segment spans residues 31-703; sequence LGPRISVPLG…WGADKSYWNE (673 aa). One can recognise a Sema domain in the interval 34–510; it reads RISVPLGSEE…SHSGVVQVPV (477 aa). N-linked (GlcNAc...) asparagine glycosylation is found at Asn-53, Asn-56, and Asn-83. Cys-107 and Cys-118 form a disulfide bridge. Residue Asn-129 is glycosylated (N-linked (GlcNAc...) asparagine). 3 cysteine pairs are disulfide-bonded: Cys-136-Cys-145, Cys-273-Cys-386, and Cys-297-Cys-346. N-linked (GlcNAc...) asparagine glycans are attached at residues Asn-397 and Asn-512. The 71-residue stretch at 512 to 582 folds into the PSI domain; it reads NCSLYPTCGD…RFLVPGKPCK (71 aa). Residues Cys-513 and Cys-530 are joined by a disulfide bond. 3 N-linked (GlcNAc...) asparagine glycosylation sites follow: Asn-567, Asn-615, and Asn-680. An Ig-like C2-type domain is found at 589–649; the sequence is NTVNTLACPL…FQCWSIEEGF (61 aa). Cys-596 and Cys-642 are disulfide-bonded. Residues 704–724 form a helical membrane-spanning segment; it reads FLVMCTLFVFAMVLLFLFFLY. At 725–823 the chain is on the cytoplasmic side; it reads RHRDGMKLFL…LGSEIRDSVV (99 aa). Phosphoserine is present on residues Ser-779, Ser-780, Ser-804, and Ser-816.

Belongs to the semaphorin family. As to quaternary structure, interacts with GIPC PDZ domain.

It localises to the membrane. Its function is as follows. Inhibits axonal extension by providing local signals to specify territories inaccessible for growing axons. The sequence is that of Semaphorin-4B from Mus musculus (Mouse).